A 362-amino-acid chain; its full sequence is UDP-galactose transporter homolog 1 (362 aa).

A run of 5 helical transmembrane segments spans residues Ile-7 to Val-27, Cys-45 to Met-65, Leu-111 to Ile-131, Ser-141 to Gly-161, and Phe-175 to Thr-195. Asn-196 carries an N-linked (GlcNAc...) asparagine glycan. Transmembrane regions (helical) follow at residues His-234–Ile-254, Ile-271–Phe-291, Leu-296–Leu-316, and Ser-317–Phe-337.

The protein belongs to the nucleotide-sugar transporter family. SLC35B subfamily.

It localises to the endoplasmic reticulum membrane. Its function is as follows. May be involved in specific transport of UDP-Gal from the cytosol to the Golgi lumen. Involved in the maintenance of optimal conditions for the folding of secretory pathway proteins in the endoplasmic reticulum. The polypeptide is UDP-galactose transporter homolog 1 (HUT1) (Candida glabrata (strain ATCC 2001 / BCRC 20586 / JCM 3761 / NBRC 0622 / NRRL Y-65 / CBS 138) (Yeast)).